A 545-amino-acid chain; its full sequence is T-box transcription factor TBX4 (545 aa).

The segment at residues 71-251 (LHEKELWKKF…NNPFAKGFRG (181 aa)) is a DNA-binding region (T-box). The segment at 479–509 (QSQVRERGPSASFPRERGLPQGCERKPPSPH) is disordered. Residues 482–505 (VRERGPSASFPRERGLPQGCERKP) are compositionally biased toward basic and acidic residues. Position 507 is a phosphoserine (Ser-507).

The protein localises to the nucleus. Its function is as follows. Transcriptional regulator that has an essential role in the organogenesis of lungs, pelvis, and hindlimbs. The protein is T-box transcription factor TBX4 (TBX4) of Homo sapiens (Human).